Reading from the N-terminus, the 89-residue chain is cAMP-regulated phosphoprotein 21 (89 aa).

A disordered region spans residues 1-89 (MSEPGDLSQT…GGESLQDQTL (89 aa)). The residue at position 2 (Ser2) is an N-acetylserine. Residues Ser33 and Ser56 each carry the phosphoserine modification.

In terms of assembly, interacts with CALM1. Phosphorylation at Ser-56 favors interaction with CALM1.

It is found in the cytoplasm. In terms of biological role, may act as a competitive inhibitor of calmodulin-dependent enzymes such as calcineurin in neurons. This Bos taurus (Bovine) protein is cAMP-regulated phosphoprotein 21 (ARPP21).